We begin with the raw amino-acid sequence, 350 residues long: Protein RecA (350 aa).

An ATP-binding site is contributed by 67–74; the sequence is GPESSGKT.

The protein belongs to the RecA family.

It localises to the cytoplasm. Functionally, can catalyze the hydrolysis of ATP in the presence of single-stranded DNA, the ATP-dependent uptake of single-stranded DNA by duplex DNA, and the ATP-dependent hybridization of homologous single-stranded DNAs. It interacts with LexA causing its activation and leading to its autocatalytic cleavage. This Mycobacterium avium (strain 104) protein is Protein RecA.